The chain runs to 424 residues: Elongation factor 1-alpha (424 aa).

Residues 5 to 223 enclose the tr-type G domain; the sequence is KPHMNLVIIG…NALQVPAKPV (219 aa). Residues 14–21 are G1; that stretch reads GHVDHGKS. 14 to 21 contributes to the GTP binding site; it reads GHVDHGKS. Residue Ser-21 participates in Mg(2+) binding. The interval 70-74 is G2; that stretch reads GVTID. Positions 91–94 are G3; sequence DAPG. GTP is bound by residues 91–95 and 148–151; these read DAPGH and NKMD. Positions 148 to 151 are G4; it reads NKMD. Positions 187-189 are G5; the sequence is SGY.

It belongs to the TRAFAC class translation factor GTPase superfamily. Classic translation factor GTPase family. EF-Tu/EF-1A subfamily.

The protein resides in the cytoplasm. It catalyses the reaction GTP + H2O = GDP + phosphate + H(+). Its function is as follows. GTP hydrolase that promotes the GTP-dependent binding of aminoacyl-tRNA to the A-site of ribosomes during protein biosynthesis. The polypeptide is Elongation factor 1-alpha (Picrophilus torridus (strain ATCC 700027 / DSM 9790 / JCM 10055 / NBRC 100828 / KAW 2/3)).